The chain runs to 159 residues: UPF0262 protein RD1_1069 (159 aa).

The protein belongs to the UPF0262 family.

This Roseobacter denitrificans (strain ATCC 33942 / OCh 114) (Erythrobacter sp. (strain OCh 114)) protein is UPF0262 protein RD1_1069.